A 259-amino-acid chain; its full sequence is Ribonuclease PH (259 aa).

Phosphate-binding positions include Arg88 and 126–128 (GTR).

Belongs to the RNase PH family. Homohexameric ring arranged as a trimer of dimers.

It catalyses the reaction tRNA(n+1) + phosphate = tRNA(n) + a ribonucleoside 5'-diphosphate. Functionally, phosphorolytic 3'-5' exoribonuclease that plays an important role in tRNA 3'-end maturation. Removes nucleotide residues following the 3'-CCA terminus of tRNAs; can also add nucleotides to the ends of RNA molecules by using nucleoside diphosphates as substrates, but this may not be physiologically important. Probably plays a role in initiation of 16S rRNA degradation (leading to ribosome degradation) during starvation. This chain is Ribonuclease PH, found in Mycobacterium ulcerans (strain Agy99).